A 360-amino-acid chain; its full sequence is Protein Wnt-2 (360 aa).

An N-terminal signal peptide occupies residues 1–25 (MNVPLGGIWLWLPLLLTWLTPEVSS). 11 disulfides stabilise this stretch: Cys76–Cys87, Cys127–Cys135, Cys137–Cys157, Cys206–Cys220, Cys208–Cys215, Cys278–Cys309, Cys294–Cys304, Cys308–Cys348, Cys324–Cys339, Cys326–Cys336, and Cys331–Cys332. A lipid anchor (O-palmitoleoyl serine; by PORCN) is attached at Ser212. The N-linked (GlcNAc...) asparagine glycan is linked to Asn295.

It belongs to the Wnt family. Post-translationally, palmitoleoylation is required for efficient binding to frizzled receptors. Depalmitoleoylation leads to Wnt signaling pathway inhibition. In terms of tissue distribution, in embryos in the developing allantois, pericardium heart, and ventral-lateral mesoderm; in adults in lung, brain, heart and placenta.

The protein resides in the secreted. The protein localises to the extracellular space. It is found in the extracellular matrix. Functionally, ligand for members of the frizzled family of seven transmembrane receptors. Functions in the canonical Wnt/beta-catenin signaling pathway. Functions as a upstream regulator of FGF10 expression. Plays an important role in embryonic lung development. May contribute to embryonic brain development by regulating the proliferation of dopaminergic precursors and neurons. The sequence is that of Protein Wnt-2 (Wnt2) from Mus musculus (Mouse).